The following is a 286-amino-acid chain: Peroxisomal membrane protein pex14 (286 aa).

Positions 61–69 (TSNFVSRDW) match the SH3-binding motif. A coiled-coil region spans residues 122-214 (KILENLDEQT…REISSLRCLQ (93 aa)). Residues 218-239 (KKDDTFATTSNSSIPVLENPLD) form a disordered region.

The protein belongs to the peroxin-14 family. As to quaternary structure, interacts with PEX13 (via SH3 domain); forming the PEX13-PEX14 docking complex. Interacts with PEX5 (via WxxxF/Y motifs).

Its subcellular location is the peroxisome membrane. Its function is as follows. Component of the PEX13-PEX14 docking complex, a translocon channel that specifically mediates the import of peroxisomal cargo proteins bound to PEX5 receptor. The PEX13-PEX14 docking complex forms a large import pore which can be opened to a diameter of about 9 nm. Mechanistically, PEX5 receptor along with cargo proteins associates with the PEX14 subunit of the PEX13-PEX14 docking complex in the cytosol, leading to the insertion of the receptor into the organelle membrane with the concomitant translocation of the cargo into the peroxisome matrix. The protein is Peroxisomal membrane protein pex14 (pex14) of Schizosaccharomyces pombe (strain 972 / ATCC 24843) (Fission yeast).